A 483-amino-acid polypeptide reads, in one-letter code: Aspartyl/glutamyl-tRNA(Asn/Gln) amidotransferase subunit B (483 aa).

This sequence belongs to the GatB/GatE family. GatB subfamily. In terms of assembly, heterotrimer of A, B and C subunits.

It carries out the reaction L-glutamyl-tRNA(Gln) + L-glutamine + ATP + H2O = L-glutaminyl-tRNA(Gln) + L-glutamate + ADP + phosphate + H(+). The catalysed reaction is L-aspartyl-tRNA(Asn) + L-glutamine + ATP + H2O = L-asparaginyl-tRNA(Asn) + L-glutamate + ADP + phosphate + 2 H(+). Its function is as follows. Allows the formation of correctly charged Asn-tRNA(Asn) or Gln-tRNA(Gln) through the transamidation of misacylated Asp-tRNA(Asn) or Glu-tRNA(Gln) in organisms which lack either or both of asparaginyl-tRNA or glutaminyl-tRNA synthetases. The reaction takes place in the presence of glutamine and ATP through an activated phospho-Asp-tRNA(Asn) or phospho-Glu-tRNA(Gln). The chain is Aspartyl/glutamyl-tRNA(Asn/Gln) amidotransferase subunit B from Rickettsia africae (strain ESF-5).